Here is an 89-residue protein sequence, read N- to C-terminus: HssA/B-like protein 15 (89 aa).

The protein belongs to the hssA/B family.

The chain is HssA/B-like protein 15 (hssl15) from Dictyostelium discoideum (Social amoeba).